The chain runs to 528 residues: MRLHLTFNHSTPATGRKNTKHTLFFGSMLACIISIISLVVPAYGANVSDEKKAKPFTHDNVIDLAMQLAQKPFKEARKAPKELIDLDYATYGKINYQENAAIWGGTPTKFSVQLFAPGFLYKNLVDIDVVENSRAFPIELTESSFSVPNDTIEKLLTQVGQYAGVRLHYPINDDEVKDEFIMFQGASYFRALSKGQTYGLSNRGLAIDVAQPKGEEYPLFKRFWIERPSKYQTAIVVHALLDSQSVTGAYRFGIYPGAPTRVDVDVTLFPRRDIAHVGLAPLTSMFLYGGLDTPDKPDYRPAVHNSEGLQIDRGNGERLWRPLNNPNKLQISAFGDEDIKGFGLIQRHRNFDYYQDLGANYQQRPSAWIEPLNDWGKGQLILLEIPSNAETNDNIVAYWEPQGGLKQAEPYRYSYRITASNDSPSFTNKARVIRSSKGQKQAKGKELLIDYSNIKPQDIEKITIDASISKGKILSSRIVAHPEINGARIFITFEPESTNVAELRIQLRKDEKPVAATWLYRWNSDDWP.

The first 44 residues, methionine 1–glycine 44, serve as a signal peptide directing secretion.

The protein belongs to the OpgD/OpgG family.

The protein localises to the periplasm. The protein operates within glycan metabolism; osmoregulated periplasmic glucan (OPG) biosynthesis. Involved in the biosynthesis of osmoregulated periplasmic glucans (OPGs). In Shewanella oneidensis (strain ATCC 700550 / JCM 31522 / CIP 106686 / LMG 19005 / NCIMB 14063 / MR-1), this protein is Glucans biosynthesis protein G 2 (opgG2).